A 454-amino-acid polypeptide reads, in one-letter code: Tol-Pal system protein TolB (454 aa).

A signal peptide spans 1-21 (MSLRPISLMLALLLTSAPALA).

The protein belongs to the TolB family. The Tol-Pal system is composed of five core proteins: the inner membrane proteins TolA, TolQ and TolR, the periplasmic protein TolB and the outer membrane protein Pal. They form a network linking the inner and outer membranes and the peptidoglycan layer.

It localises to the periplasm. Functionally, part of the Tol-Pal system, which plays a role in outer membrane invagination during cell division and is important for maintaining outer membrane integrity. This chain is Tol-Pal system protein TolB, found in Sphingopyxis alaskensis (strain DSM 13593 / LMG 18877 / RB2256) (Sphingomonas alaskensis).